The following is a 427-amino-acid chain: MASIIIGSQWGDEGKGKLVDILSQQFDVVARCQGGANAGHTIVVDGKKIALHLIPSGILNEKASCILGNGMVIHLPTFFKEVQGLQDKGINYKGRLFVSDRAHLVFDLHQMIDAMKEAELSNGTSNDSIGTTKRGIGPCYSSKASRGGLRVCDLYSPEHFRKTFTRLVENKHKRFGSFEYDVEAELKRYQEFAEMLKPFVIDSVYYLNQAFKDGKKVLIEGAQSTMLDLDFGCYPYVTSSASSVGGACTGLGISPNKVVTQIGVVKAYTTKVGSGPFPTEQNDHVGDSLRKAGSEFGTTTGRPRRIGWLDAVVLRYTSMINDFTRLNLTKLDVLSDFEEIKIGVDYKYKGETIKSFPASLETLAQCEVVYESFPGWKCDLSHVTEYDQLPIQAKNYIKRIEELVGVPIVYIGVGVERKNLIERKELI.

GTP contacts are provided by residues 11-17 (GDEGKGK) and 39-41 (GHT). D12 acts as the Proton acceptor in catalysis. Mg(2+)-binding residues include D12 and G39. Residues 12 to 15 (DEGK), 37 to 40 (NAGH), T132, R146, Q223, T238, and R302 contribute to the IMP site. H40 serves as the catalytic Proton donor. Residue 298–304 (TTTGRPR) coordinates substrate. GTP-binding positions include R304, 330 to 332 (KLD), and 412 to 414 (GVG).

Belongs to the adenylosuccinate synthetase family. In terms of assembly, homodimer. It depends on Mg(2+) as a cofactor.

It is found in the cytoplasm. The catalysed reaction is IMP + L-aspartate + GTP = N(6)-(1,2-dicarboxyethyl)-AMP + GDP + phosphate + 2 H(+). It participates in purine metabolism; AMP biosynthesis via de novo pathway; AMP from IMP: step 1/2. Its function is as follows. Plays an important role in the de novo pathway and in the salvage pathway of purine nucleotide biosynthesis. Catalyzes the first committed step in the biosynthesis of AMP from IMP. The chain is Adenylosuccinate synthetase (purA) from Dictyostelium discoideum (Social amoeba).